Consider the following 86-residue polypeptide: Anti-adapter protein IraP (86 aa).

The stretch at 1 to 36 forms a coiled coil; the sequence is MKNLIAELLLKLAQKEEESKELCAQVEALEIIVTAM.

It belongs to the IraP family. In terms of assembly, interacts with RssB.

The protein resides in the cytoplasm. Inhibits RpoS proteolysis by regulating RssB activity, thereby increasing the stability of the sigma stress factor RpoS especially during phosphate starvation, but also in stationary phase and during nitrogen starvation. Its effect on RpoS stability is due to its interaction with RssB, which probably blocks the interaction of RssB with RpoS, and the consequent delivery of the RssB-RpoS complex to the ClpXP protein degradation pathway. In Shigella boydii serotype 4 (strain Sb227), this protein is Anti-adapter protein IraP.